The chain runs to 195 residues: Peptidyl-tRNA hydrolase (195 aa).

Tyr17 provides a ligand contact to tRNA. His22 acts as the Proton acceptor in catalysis. TRNA contacts are provided by Phe68, Asn70, and Asn116.

This sequence belongs to the PTH family. Monomer.

The protein resides in the cytoplasm. The catalysed reaction is an N-acyl-L-alpha-aminoacyl-tRNA + H2O = an N-acyl-L-amino acid + a tRNA + H(+). Functionally, hydrolyzes ribosome-free peptidyl-tRNAs (with 1 or more amino acids incorporated), which drop off the ribosome during protein synthesis, or as a result of ribosome stalling. In terms of biological role, catalyzes the release of premature peptidyl moieties from peptidyl-tRNA molecules trapped in stalled 50S ribosomal subunits, and thus maintains levels of free tRNAs and 50S ribosomes. This chain is Peptidyl-tRNA hydrolase, found in Shewanella loihica (strain ATCC BAA-1088 / PV-4).